A 543-amino-acid chain; its full sequence is Vibriobactin-specific 2,3-dihydroxybenzoate-AMP ligase (543 aa).

A helical transmembrane segment spans residues 240 to 259 (FPLSSPGALGVFWAGGCVVL).

Belongs to the ATP-dependent AMP-binding enzyme family.

Its subcellular location is the cell inner membrane. It catalyses the reaction 2,3-dihydroxybenzoate + holo-[ACP] + ATP = 2,3-dihydroxybenzoyl-[ACP] + AMP + diphosphate. Its pathway is siderophore biosynthesis; vibriobactin biosynthesis. Functionally, activation of the carboxylate group of 2,3-dihydroxy-benzoate (DHB), via ATP-dependent PPi exchange reactions, to the acyladenylate, preparing that molecule for the final stages of vibriobactin synthesis. This Vibrio cholerae serotype O1 (strain ATCC 39315 / El Tor Inaba N16961) protein is Vibriobactin-specific 2,3-dihydroxybenzoate-AMP ligase (vibE).